We begin with the raw amino-acid sequence, 369 residues long: Phosphatidylglycerol--prolipoprotein diacylglyceryl transferase (369 aa).

3 helical membrane-spanning segments follow: residues 26 to 46 (YYGILYATGILVAIIAGILTL), 60 to 80 (YVFIGIISIIFGARTWSFIIG), and 97 to 117 (LAIQGGVIFTITTGLIFFFFI). Arginine 167 contacts a 1,2-diacyl-sn-glycero-3-phospho-(1'-sn-glycerol). 2 consecutive transmembrane segments (helical) span residues 216 to 236 (VPIFLIESFFNVIAFIIIVFL) and 273 to 293 (FVTSIVTSVLFLLGGSIGFIF).

This sequence belongs to the Lgt family.

The protein localises to the cell membrane. It catalyses the reaction L-cysteinyl-[prolipoprotein] + a 1,2-diacyl-sn-glycero-3-phospho-(1'-sn-glycerol) = an S-1,2-diacyl-sn-glyceryl-L-cysteinyl-[prolipoprotein] + sn-glycerol 1-phosphate + H(+). The protein operates within protein modification; lipoprotein biosynthesis (diacylglyceryl transfer). In terms of biological role, catalyzes the transfer of the diacylglyceryl group from phosphatidylglycerol to the sulfhydryl group of the N-terminal cysteine of a prolipoprotein, the first step in the formation of mature lipoproteins. The polypeptide is Phosphatidylglycerol--prolipoprotein diacylglyceryl transferase (Mycoplasmoides gallisepticum (strain R(low / passage 15 / clone 2)) (Mycoplasma gallisepticum)).